The primary structure comprises 98 residues: NADH-ubiquinone oxidoreductase chain 4L (98 aa).

Transmembrane regions (helical) follow at residues 1–21 (MTLI…GLLM), 29–49 (ALLC…LTIL), and 61–81 (IILL…LVTI).

This sequence belongs to the complex I subunit 4L family. As to quaternary structure, core subunit of respiratory chain NADH dehydrogenase (Complex I) which is composed of 45 different subunits.

The protein resides in the mitochondrion inner membrane. The enzyme catalyses a ubiquinone + NADH + 5 H(+)(in) = a ubiquinol + NAD(+) + 4 H(+)(out). Functionally, core subunit of the mitochondrial membrane respiratory chain NADH dehydrogenase (Complex I) which catalyzes electron transfer from NADH through the respiratory chain, using ubiquinone as an electron acceptor. Part of the enzyme membrane arm which is embedded in the lipid bilayer and involved in proton translocation. The sequence is that of NADH-ubiquinone oxidoreductase chain 4L (MT-ND4L) from Eubalaena australis (Southern right whale).